Here is a 621-residue protein sequence, read N- to C-terminus: UvrABC system protein C (621 aa).

The region spanning 11 to 90 (TTPGVYLYKD…IKKHRPRYNI (80 aa)) is the GIY-YIG domain. The 36-residue stretch at 200 to 235 (KELVELLQKDMLYASEALEFEKAATLRDQIQAIKHT) folds into the UVR domain.

It belongs to the UvrC family. In terms of assembly, interacts with UvrB in an incision complex.

It is found in the cytoplasm. Its function is as follows. The UvrABC repair system catalyzes the recognition and processing of DNA lesions. UvrC both incises the 5' and 3' sides of the lesion. The N-terminal half is responsible for the 3' incision and the C-terminal half is responsible for the 5' incision. The polypeptide is UvrABC system protein C (Lawsonia intracellularis (strain PHE/MN1-00)).